The primary structure comprises 156 residues: Ribosomal RNA large subunit methyltransferase H (156 aa).

S-adenosyl-L-methionine is bound by residues Leu73, Gly104, and 123-128 (ISSMTL).

The protein belongs to the RNA methyltransferase RlmH family. As to quaternary structure, homodimer.

The protein resides in the cytoplasm. The catalysed reaction is pseudouridine(1915) in 23S rRNA + S-adenosyl-L-methionine = N(3)-methylpseudouridine(1915) in 23S rRNA + S-adenosyl-L-homocysteine + H(+). Specifically methylates the pseudouridine at position 1915 (m3Psi1915) in 23S rRNA. The chain is Ribosomal RNA large subunit methyltransferase H from Burkholderia cenocepacia (strain HI2424).